Reading from the N-terminus, the 386-residue chain is Cell division protein FtsZ (386 aa).

GTP contacts are provided by residues 21–25, 108–110, E139, R143, and N187; these read GGGGN and GTG.

This sequence belongs to the FtsZ family. In terms of assembly, homodimer. Polymerizes to form a dynamic ring structure in a strictly GTP-dependent manner. Interacts directly with several other division proteins.

The protein localises to the cytoplasm. Essential cell division protein that forms a contractile ring structure (Z ring) at the future cell division site. The regulation of the ring assembly controls the timing and the location of cell division. One of the functions of the FtsZ ring is to recruit other cell division proteins to the septum to produce a new cell wall between the dividing cells. Binds GTP and shows GTPase activity. The chain is Cell division protein FtsZ from Coxiella burnetii (strain RSA 493 / Nine Mile phase I).